A 181-amino-acid chain; its full sequence is Inner membrane-spanning protein YciB (181 aa).

5 helical membrane-spanning segments follow: residues 10–30 (LVIF…GALI), 50–70 (MHLI…ILHD), 72–92 (SFIK…LGVS), 118–138 (VTWY…YVAF), and 148–168 (FKVF…VVYL).

Belongs to the YciB family.

The protein localises to the cell inner membrane. Its function is as follows. Plays a role in cell envelope biogenesis, maintenance of cell envelope integrity and membrane homeostasis. This is Inner membrane-spanning protein YciB from Shewanella pealeana (strain ATCC 700345 / ANG-SQ1).